Reading from the N-terminus, the 315-residue chain is tRNA wybutosine-synthesizing protein 5 (315 aa).

Positions 102–267 (DEKYYLRSLG…YDKTDTYGNK (166 aa)) constitute a JmjC domain. A 2-oxoglutarate-binding site is contributed by Tyr106. Fe cation-binding residues include His160 and Asp162. Positions 166 and 175 each coordinate 2-oxoglutarate. His235 lines the Fe cation pocket.

It belongs to the TYW5 family. In terms of assembly, homodimer. Requires Fe(2+) as cofactor.

The enzyme catalyses 7-[(3S)-3-amino-3-carboxypropyl]wyosine(37) in tRNA(Phe) + 2-oxoglutarate + O2 = 7-(2-hydroxy-3-amino-3-carboxypropyl)wyosine(37) in tRNA(Phe) + succinate + CO2. Its pathway is tRNA modification; wybutosine-tRNA(Phe) biosynthesis. In terms of biological role, tRNA hydroxylase that acts as a component of the wybutosine biosynthesis pathway. Wybutosine is a hyper modified guanosine with a tricyclic base found at the 3'-position adjacent to the anticodon of eukaryotic phenylalanine tRNA. Catalyzes the hydroxylation of 7-(a-amino-a-carboxypropyl)wyosine (yW-72) into undermodified hydroxywybutosine (OHyW*). OHyW* being further transformed into hydroxywybutosine (OHyW) by LCMT2/TYW4. OHyW is a derivative of wybutosine found in higher eukaryotes. The chain is tRNA wybutosine-synthesizing protein 5 (TYW5) from Homo sapiens (Human).